Consider the following 439-residue polypeptide: Divalent metal cation transporter MntH 1 (439 aa).

9 consecutive transmembrane segments (helical) span residues 64–84 (FGYA…LLQS), 139–161 (LLGV…VLAL), 171–191 (AIVL…LVLI), 214–234 (PLYL…LYLH), 262–282 (IGSL…AAAA), 300–320 (LLDP…ALLA), 359–379 (LVPA…KLLV), 380–400 (LSQV…IRFS), and 418–438 (LAWS…YFWF).

This sequence belongs to the NRAMP family.

The protein resides in the cell inner membrane. In terms of biological role, h(+)-stimulated, divalent metal cation uptake system. In Pseudomonas aeruginosa (strain ATCC 15692 / DSM 22644 / CIP 104116 / JCM 14847 / LMG 12228 / 1C / PRS 101 / PAO1), this protein is Divalent metal cation transporter MntH 1.